The following is a 252-amino-acid chain: Uridylate kinase (252 aa).

24–27 (KLSG) lines the ATP pocket. Residues 32 to 37 (GEEGFG) are involved in allosteric activation by GTP. Gly66 lines the UMP pocket. 2 residues coordinate ATP: Gly67 and Arg71. UMP is bound by residues Asp86 and 147–154 (TGNPFFTT). Residues Thr174, Tyr180, and Asp183 each contribute to the ATP site.

The protein belongs to the UMP kinase family. In terms of assembly, homohexamer.

It is found in the cytoplasm. The enzyme catalyses UMP + ATP = UDP + ADP. It functions in the pathway pyrimidine metabolism; CTP biosynthesis via de novo pathway; UDP from UMP (UMPK route): step 1/1. Allosterically activated by GTP. Inhibited by UTP. Functionally, catalyzes the reversible phosphorylation of UMP to UDP. The protein is Uridylate kinase of Alcanivorax borkumensis (strain ATCC 700651 / DSM 11573 / NCIMB 13689 / SK2).